Consider the following 1260-residue polypeptide: Methionine synthase (1260 aa).

The Hcy-binding domain maps to 13–333 (FGIIRKILSE…DHIRAFCNAI (321 aa)). Positions 255, 318, and 319 each coordinate Zn(2+). The 262-residue stretch at 364 to 625 (FVNVGERCNV…IPKDLLKLVE (262 aa)) folds into the Pterin-binding domain. The region spanning 655 to 749 (EVEEWRNKPV…FMEEEKRLKR (95 aa)) is the B12-binding N-terminal domain. Methylcob(III)alamin is bound by residues glutamate 699, 775–779 (GDVHD), histidine 778, serine 823, threonine 827, and alanine 879. The B12-binding domain maps to 766-883 (GVVVLATVKG…VHVLDASRSV (118 aa)). The 341-residue stretch at 916 to 1256 (SLKDRKYTSL…LSSILSYDRL (341 aa)) folds into the AdoMet activation domain. S-adenosyl-L-methionine is bound by residues aspartate 966, arginine 1163, and 1218–1219 (YF).

It belongs to the vitamin-B12 dependent methionine synthase family. It depends on methylcob(III)alamin as a cofactor. Zn(2+) serves as cofactor.

It carries out the reaction (6S)-5-methyl-5,6,7,8-tetrahydrofolate + L-homocysteine = (6S)-5,6,7,8-tetrahydrofolate + L-methionine. Its pathway is amino-acid biosynthesis; L-methionine biosynthesis via de novo pathway; L-methionine from L-homocysteine (MetH route): step 1/1. In terms of biological role, catalyzes the transfer of a methyl group from methyl-cobalamin to homocysteine, yielding enzyme-bound cob(I)alamin and methionine. Subsequently, remethylates the cofactor using methyltetrahydrofolate. The protein is Methionine synthase (mtr) of Dictyostelium discoideum (Social amoeba).